A 387-amino-acid chain; its full sequence is S-adenosylmethionine synthase (387 aa).

His16 contacts ATP. Residue Asp18 participates in Mg(2+) binding. Residue Glu44 participates in K(+) binding. L-methionine contacts are provided by Glu57 and Gln100. The tract at residues 100 to 110 (QSPDIAQGVDE) is flexible loop. ATP-binding positions include 167–169 (DAK), 232–233 (RF), Asp241, 247–248 (RK), Ala264, and Lys268. Asp241 contacts L-methionine. Lys272 contacts L-methionine.

It belongs to the AdoMet synthase family. Homotetramer; dimer of dimers. Mg(2+) is required as a cofactor. K(+) serves as cofactor.

Its subcellular location is the cytoplasm. It carries out the reaction L-methionine + ATP + H2O = S-adenosyl-L-methionine + phosphate + diphosphate. It participates in amino-acid biosynthesis; S-adenosyl-L-methionine biosynthesis; S-adenosyl-L-methionine from L-methionine: step 1/1. In terms of biological role, catalyzes the formation of S-adenosylmethionine (AdoMet) from methionine and ATP. The overall synthetic reaction is composed of two sequential steps, AdoMet formation and the subsequent tripolyphosphate hydrolysis which occurs prior to release of AdoMet from the enzyme. This Janthinobacterium sp. (strain Marseille) (Minibacterium massiliensis) protein is S-adenosylmethionine synthase.